Here is a 319-residue protein sequence, read N- to C-terminus: tRNA uridine(34) hydroxylase (319 aa).

The 95-residue stretch at 125–219 (LDENTVVIDA…YGKDPEVQGD (95 aa)) folds into the Rhodanese domain. C179 (cysteine persulfide intermediate) is an active-site residue.

It belongs to the TrhO family.

It carries out the reaction uridine(34) in tRNA + AH2 + O2 = 5-hydroxyuridine(34) in tRNA + A + H2O. Its function is as follows. Catalyzes oxygen-dependent 5-hydroxyuridine (ho5U) modification at position 34 in tRNAs. This is tRNA uridine(34) hydroxylase from Lactococcus lactis subsp. lactis (strain IL1403) (Streptococcus lactis).